A 293-amino-acid chain; its full sequence is MKVLAIDIGGTKIALGNVVEGHLQHRKQFPTPVVNDATTLAKEILAHCQAWLSDVDVIGISTTGLVSEQGISAINPGTLSFPTPFPLHSELHRLSGKPVKMLNDAQAAAWYEFLQLSPELDVRNMAYITVSTGVGGGLVINQQLHKGKSNFAGHIGHTVLDPNGPLCGCQQRGCVEAIASGNAINAGAQALFGQAISNIELFQLAQHNEQASALIQQSAEAIAQLCLNLKATLDLDLVVIGGGVGLAHGYLARVQAFIDKQPLVFQVKVRAAVGDYDACLLGAAFQFEESNLS.

ATP is bound by residues 5 to 12 and 133 to 140; these read AIDIGGTK and GVGGGLVI. Zn(2+) contacts are provided by H157, C167, C169, and C174.

Belongs to the ROK (NagC/XylR) family. NanK subfamily. As to quaternary structure, homodimer.

It catalyses the reaction an N-acyl-D-mannosamine + ATP = an N-acyl-D-mannosamine 6-phosphate + ADP + H(+). Its pathway is amino-sugar metabolism; N-acetylneuraminate degradation; D-fructose 6-phosphate from N-acetylneuraminate: step 2/5. Its function is as follows. Catalyzes the phosphorylation of N-acetylmannosamine (ManNAc) to ManNAc-6-P. The chain is N-acetylmannosamine kinase from Vibrio vulnificus (strain YJ016).